Here is a 162-residue protein sequence, read N- to C-terminus: Nucleotide-binding protein CMM_2802 (162 aa).

It belongs to the YajQ family.

Nucleotide-binding protein. In Clavibacter michiganensis subsp. michiganensis (strain NCPPB 382), this protein is Nucleotide-binding protein CMM_2802.